A 344-amino-acid polypeptide reads, in one-letter code: WW domain binding protein 1-like (344 aa).

Residues 42 to 62 (LWWFWLVWTIIIILSCCCVCH) traverse the membrane as a helical segment. Disordered stretches follow at residues 132–250 (LLPP…RFTG) and 302–321 (CLSS…PRPP). Positions 145 to 173 (PGADQPQGSQGAQSSPLSGPSRSSTRPPS) are enriched in low complexity. Ser173 is subject to Phosphoserine. The segment covering 212–228 (LDRDSECKEELLKDSSS) has biased composition (basic and acidic residues).

It is found in the membrane. In Rattus norvegicus (Rat), this protein is WW domain binding protein 1-like (Wbp1l).